The primary structure comprises 277 residues: Phosphatidylglycerol--prolipoprotein diacylglyceryl transferase (277 aa).

The next 4 helical transmembrane spans lie at 11–31 (IIFS…LISF), 55–75 (LLYI…IIFY), 93–113 (GGMS…YLSL), and 117–137 (VKIL…LGAG). Arg138 lines the a 1,2-diacyl-sn-glycero-3-phospho-(1'-sn-glycerol) pocket. Transmembrane regions (helical) follow at residues 192 to 212 (PSQL…IYFF), 220 to 240 (GSIS…SEFF), and 256 to 276 (MGQI…NLFI).

The protein belongs to the Lgt family.

The protein resides in the cell inner membrane. It carries out the reaction L-cysteinyl-[prolipoprotein] + a 1,2-diacyl-sn-glycero-3-phospho-(1'-sn-glycerol) = an S-1,2-diacyl-sn-glyceryl-L-cysteinyl-[prolipoprotein] + sn-glycerol 1-phosphate + H(+). The protein operates within protein modification; lipoprotein biosynthesis (diacylglyceryl transfer). In terms of biological role, catalyzes the transfer of the diacylglyceryl group from phosphatidylglycerol to the sulfhydryl group of the N-terminal cysteine of a prolipoprotein, the first step in the formation of mature lipoproteins. This Buchnera aphidicola subsp. Schizaphis graminum (strain Sg) protein is Phosphatidylglycerol--prolipoprotein diacylglyceryl transferase.